Here is a 500-residue protein sequence, read N- to C-terminus: ACT domain-containing protein ACR2 (500 aa).

4 ACT domains span residues 39-121 (VVKV…EANN), 136-213 (AIEM…ADPA), 298-373 (IVTV…RVCE), and 376-459 (KLEL…TVGS). Residues 450–478 (EDTKIDTVGSDEPTASASATPQRQPQPHR) form a disordered region. Residues 462–474 (PTASASATPQRQP) show a composition bias toward polar residues.

In terms of biological role, may bind amino acids. This is ACT domain-containing protein ACR2 from Arabidopsis thaliana (Mouse-ear cress).